We begin with the raw amino-acid sequence, 782 residues long: Translation initiation factor IF-2 (782 aa).

Positions 47 to 196 are disordered; that stretch reads DNAIDGTNKK…TPPKPKELPE (150 aa). A compositionally biased stretch (basic and acidic residues) spans 53–65; that stretch reads TNKKAEAPKKETT. The span at 66–81 shows a compositional bias: polar residues; the sequence is SNENGNSKGPNKPNMT. Over residues 82 to 93 the composition is skewed to low complexity; the sequence is NSNEKSNKPNKP. Residues 115 to 129 are compositionally biased toward polar residues; sequence KPANTSNQTQSSGNK. Positions 133-170 are enriched in low complexity; it reads GGQKRNNNNNSNRPGGGNPNRPGGNNRPNRGGNFNNKG. The tr-type G domain occupies 283-452; that stretch reads ERPPVVTIMG…LLVSEVEELK (170 aa). The segment at 292–299 is G1; it reads GHVDHGKT. Position 292–299 (292–299) interacts with GTP; it reads GHVDHGKT. The segment at 317-321 is G2; that stretch reads GITQH. The interval 338–341 is G3; the sequence is DTPG. GTP contacts are provided by residues 338 to 342 and 392 to 395; these read DTPGH and NKID. Residues 392–395 form a G4 region; the sequence is NKID. The tract at residues 428 to 430 is G5; sequence SAK.

It belongs to the TRAFAC class translation factor GTPase superfamily. Classic translation factor GTPase family. IF-2 subfamily.

The protein resides in the cytoplasm. Functionally, one of the essential components for the initiation of protein synthesis. Protects formylmethionyl-tRNA from spontaneous hydrolysis and promotes its binding to the 30S ribosomal subunits. Also involved in the hydrolysis of GTP during the formation of the 70S ribosomal complex. This Listeria innocua serovar 6a (strain ATCC BAA-680 / CLIP 11262) protein is Translation initiation factor IF-2.